The chain runs to 732 residues: Catalase-peroxidase (732 aa).

Residues 1–24 form a disordered region; the sequence is MDAKTDDNSAGKCPVAHGSAGRTN. A cross-link (tryptophyl-tyrosyl-methioninium (Trp-Tyr) (with M-245)) is located at residues 96-219; the sequence is WHSAGTYRIA…LGAVQMGLIY (124 aa). Residue His97 is the Proton acceptor of the active site. Residues 219–245 constitute a cross-link (tryptophyl-tyrosyl-methioninium (Tyr-Met) (with W-96)); it reads YVNPEGPNGNPDPLAAARDIRDTFARM. His260 lines the heme b pocket.

This sequence belongs to the peroxidase family. Peroxidase/catalase subfamily. In terms of assembly, homodimer or homotetramer. It depends on heme b as a cofactor. In terms of processing, formation of the three residue Trp-Tyr-Met cross-link is important for the catalase, but not the peroxidase activity of the enzyme.

The enzyme catalyses H2O2 + AH2 = A + 2 H2O. It carries out the reaction 2 H2O2 = O2 + 2 H2O. Bifunctional enzyme with both catalase and broad-spectrum peroxidase activity. This is Catalase-peroxidase from Mesorhizobium japonicum (strain LMG 29417 / CECT 9101 / MAFF 303099) (Mesorhizobium loti (strain MAFF 303099)).